Reading from the N-terminus, the 356-residue chain is Protein pelota homolog (356 aa).

Belongs to the eukaryotic release factor 1 family. Pelota subfamily. In terms of assembly, monomer. Requires a divalent metal cation as cofactor.

Its subcellular location is the cytoplasm. In terms of biological role, may function in recognizing stalled ribosomes, interact with stem-loop structures in stalled mRNA molecules, and effect endonucleolytic cleavage of the mRNA. May play a role in the release non-functional ribosomes and degradation of damaged mRNAs. Has endoribonuclease activity. The polypeptide is Protein pelota homolog (Aeropyrum pernix (strain ATCC 700893 / DSM 11879 / JCM 9820 / NBRC 100138 / K1)).